A 541-amino-acid chain; its full sequence is Glycogen synthase (541 aa).

ADP-alpha-D-glucose is bound at residue Lys17. Residues 497 to 541 (LARPASPPDTAPVGKPARRRRTTALSTTARAHPVARAAGREKIRA) are disordered.

Belongs to the glycosyltransferase 1 family. Bacterial/plant glycogen synthase subfamily.

The catalysed reaction is [(1-&gt;4)-alpha-D-glucosyl](n) + ADP-alpha-D-glucose = [(1-&gt;4)-alpha-D-glucosyl](n+1) + ADP + H(+). Its pathway is glycan biosynthesis; glycogen biosynthesis. Its function is as follows. Synthesizes alpha-1,4-glucan chains using ADP-glucose. This chain is Glycogen synthase, found in Ralstonia nicotianae (strain ATCC BAA-1114 / GMI1000) (Ralstonia solanacearum).